A 338-amino-acid chain; its full sequence is Glutamate/glutamine/aspartate/asparagine-binding protein BztA (338 aa).

Positions 1-22 (MKKSAFFGSVALAALVAGAASA) are cleaved as a signal peptide.

This sequence belongs to the bacterial solute-binding protein 3 family.

The protein resides in the periplasm. Its function is as follows. Part of a binding-protein-dependent transport system for glutamate, glutamine, aspartate and asparagine. In Rhodobacter capsulatus (strain ATCC BAA-309 / NBRC 16581 / SB1003), this protein is Glutamate/glutamine/aspartate/asparagine-binding protein BztA (bztA).